Reading from the N-terminus, the 271-residue chain is Orotidine 5'-phosphate decarboxylase (271 aa).

Residue K95 is the Proton donor of the active site.

Belongs to the OMP decarboxylase family. Type 2 subfamily.

It carries out the reaction orotidine 5'-phosphate + H(+) = UMP + CO2. It participates in pyrimidine metabolism; UMP biosynthesis via de novo pathway; UMP from orotate: step 2/2. This chain is Orotidine 5'-phosphate decarboxylase, found in Aromatoleum aromaticum (strain DSM 19018 / LMG 30748 / EbN1) (Azoarcus sp. (strain EbN1)).